A 632-amino-acid chain; its full sequence is Phosphomethylpyrimidine synthase (632 aa).

Substrate contacts are provided by residues Asn237, Met266, Tyr295, His331, 351 to 353, 392 to 395, and Glu431; these read SRG and DGLR. His435 is a Zn(2+) binding site. Substrate is bound at residue Tyr458. A Zn(2+)-binding site is contributed by His499. Residues Cys579, Cys582, and Cys587 each coordinate [4Fe-4S] cluster.

The protein belongs to the ThiC family. Homodimer. It depends on [4Fe-4S] cluster as a cofactor.

It catalyses the reaction 5-amino-1-(5-phospho-beta-D-ribosyl)imidazole + S-adenosyl-L-methionine = 4-amino-2-methyl-5-(phosphooxymethyl)pyrimidine + CO + 5'-deoxyadenosine + formate + L-methionine + 3 H(+). The protein operates within cofactor biosynthesis; thiamine diphosphate biosynthesis. In terms of biological role, catalyzes the synthesis of the hydroxymethylpyrimidine phosphate (HMP-P) moiety of thiamine from aminoimidazole ribotide (AIR) in a radical S-adenosyl-L-methionine (SAM)-dependent reaction. The protein is Phosphomethylpyrimidine synthase of Nitrosomonas eutropha (strain DSM 101675 / C91 / Nm57).